The primary structure comprises 2049 residues: Nonribosomal peptide synthetase tcpP (2049 aa).

Positions arginine 13–asparagine 395 are adenylation 1. Residues alanine 497–aspartate 573 enclose the Carrier 1 domain. Serine 534 carries the O-(pantetheine 4'-phosphoryl)serine modification. Positions arginine 605–serine 913 are condensation 1. Residues valine 1071–arginine 1452 form an adenylation 2 region. A Carrier 2 domain is found at aspartate 1550–leucine 1625. Serine 1585 is modified (O-(pantetheine 4'-phosphoryl)serine). The segment at methionine 1662–aspartate 2044 is condensation 2.

Belongs to the NRP synthetase family.

It functions in the pathway secondary metabolite biosynthesis. Functionally, nonribosomal peptide synthetase; part of the gene cluster that mediates the biosynthesis of an unusual class of epipolythiodioxopiperazines (ETPs) lacking the reactive thiol group important for toxicity. Firstly, L-tyrosine is prenylated by tcpD, before undergoing condensation with L-glycine in a reaction catalyzed by the NRPS tcpP leading to the diketopiperazine (DKP) backbone. Afterwards the alpha-carbon of tyrosine is oxidized by the cytochrome P450 tcpC to form a hydroxyl group. However, in contrast other ETP biosynthesis pathways studied so far, tcpC is not able to bishydroxylate the DKP at both alpha-carbon positions, but hydroxylates the alpha-carbon of the tyrosine part and the nitrogen of the glycine part. The next steps involve an alpha,beta-elimination reaction catalyzed by tcpI, a methylation by the methyltransferase tcpN the action of the four enzyme cascade tcpG/K/J/I. Due to a dysfunctional cytochrome P450 monooxygenase tcpC, the pathway leads to the biosynthesis of probable non-toxic metabolites lacking the reactive thiol group. The chain is Nonribosomal peptide synthetase tcpP from Claviceps purpurea (strain 20.1) (Ergot fungus).